We begin with the raw amino-acid sequence, 504 residues long: Arabinose import ATP-binding protein AraG (504 aa).

ABC transporter domains follow at residues 8 to 243 and 256 to 499; these read LSFR…MVGR and YGEE…MPKV. Position 40-47 (40-47) interacts with ATP; it reads GENGAGKS.

This sequence belongs to the ABC transporter superfamily. Arabinose importer (TC 3.A.1.2.2) family. The complex is composed of two ATP-binding proteins (AraG), two transmembrane proteins (AraH) and a solute-binding protein (AraF).

The protein localises to the cell inner membrane. The catalysed reaction is L-arabinose(out) + ATP + H2O = L-arabinose(in) + ADP + phosphate + H(+). Its function is as follows. Part of the ABC transporter complex AraFGH involved in arabinose import. Responsible for energy coupling to the transport system. The polypeptide is Arabinose import ATP-binding protein AraG (Shigella sonnei (strain Ss046)).